A 432-amino-acid polypeptide reads, in one-letter code: Amino acid transporter ANT1 (432 aa).

Residues 1–30 (MAIKDLTATTGDSSLPLIKSPPSETTGGDR) form a disordered region. The Cytoplasmic portion of the chain corresponds to 1 to 35 (MAIKDLTATTGDSSLPLIKSPPSETTGGDRTSALQ). A helical transmembrane segment spans residues 36 to 56 (TLGNIIVSIVGTGVLGLPYAF). At 57-62 (RIAGWL) the chain is on the lumenal side. The chain crosses the membrane as a helical span at residues 63-83 (AGSLGVIIVGFATYYCMLLLI). The Cytoplasmic portion of the chain corresponds to 84 to 115 (QCRDKLESEEGEEESKTYGDLGFKCMGTKGRY). The chain crosses the membrane as a helical span at residues 116–136 (LTEFLIFTAQCGGSVAYLVFI). Over 137–147 (GRNLSSIFSSY) the chain is Lumenal. The helical transmembrane segment at 148-168 (GLSMVSFILILVPIEVGLSWI) threads the bilayer. Over 169–172 (TSLS) the chain is Cytoplasmic. Residues 173 to 193 (ALSPFSIFADICNIIAMCFVV) traverse the membrane as a helical segment. Over 194 to 219 (KENVEMVIEGDFSFSDRTAISSTIGG) the chain is Lumenal. A helical transmembrane segment spans residues 220–240 (LPFAGGVAVFCFEGFAMTLAL). Topologically, residues 241–256 (ESSMREREAFPKLLAK) are cytoplasmic. The chain crosses the membrane as a helical span at residues 257–277 (VLAGITFVYVLFGFCGYMAYG). At 278-292 (DQTKDIITLNLPNNW) the chain is on the lumenal side. A helical transmembrane segment spans residues 293–313 (SAIAVQIGLCVGLTFTFPIMV). Residues 314 to 353 (HPLNEIIEQKLKRIDWLQKHHNGYSNETGSVSKFAIFTTR) are Cytoplasmic-facing. Residues 354-374 (TLLVVGLAAIASLVPGFGTFA) form a helical membrane-spanning segment. Residues 375 to 379 (SLVGS) lie on the Lumenal side of the membrane. Residues 380 to 400 (TLCALISFVLPASYHLTLLGP) form a helical membrane-spanning segment. The Cytoplasmic portion of the chain corresponds to 401–410 (SLNVWNKSID). The chain crosses the membrane as a helical span at residues 411–431 (VFIVICGLIFAVYGTYNTIVG). Val432 is a topological domain (lumenal).

Belongs to the amino acid/polyamine transporter 2 family. Amino acid/auxin permease (AAAP) (TC 2.A.18.8) subfamily. In terms of tissue distribution, ubiquitous. Highly expressed in flowers and cauline leaves and at lower levels in stems, leaves and roots.

The protein localises to the endoplasmic reticulum membrane. In terms of biological role, translocates aromatic and neutral amino acids such as tyrosine, tryptophan, phenylalanine, histidine, proline, leucine, valine, glutamine, as well as arginine. Transports the auxins indole-3-acetic acid (IAA) and 2,4-dichlorophenoxyacetic acid (2,4-D). The chain is Amino acid transporter ANT1 from Arabidopsis thaliana (Mouse-ear cress).